The sequence spans 523 residues: UDP-glucuronosyltransferase 3A2 (523 aa).

A signal peptide spans 1–22 (MAGQRVLLLVGFLLPGVLLSEA). At 23 to 483 (AKILTISTVG…YVFQQPWHEQ (461 aa)) the chain is on the extracellular side. The N-linked (GlcNAc...) asparagine glycan is linked to Asn-52. Residues 484-504 (YLLDVFVFLLGLTLGTLWLCG) form a helical membrane-spanning segment. At 505-523 (KLLGMAVWWLRGARKVKET) the chain is on the cytoplasmic side.

This sequence belongs to the UDP-glycosyltransferase family.

It is found in the membrane. The catalysed reaction is glucuronate acceptor + UDP-alpha-D-glucuronate = acceptor beta-D-glucuronoside + UDP + H(+). Functionally, UDP-glucuronosyltransferases catalyze phase II biotransformation reactions in which lipophilic substrates are conjugated with glucuronic acid to increase water solubility and enhance excretion. They are of major importance in the conjugation and subsequent elimination of potentially toxic xenobiotics and endogenous compounds. This Homo sapiens (Human) protein is UDP-glucuronosyltransferase 3A2 (UGT3A2).